The primary structure comprises 98 residues: Large ribosomal subunit protein uL23 (98 aa).

This sequence belongs to the universal ribosomal protein uL23 family. Part of the 50S ribosomal subunit. Contacts protein L29, and trigger factor when it is bound to the ribosome.

One of the early assembly proteins it binds 23S rRNA. One of the proteins that surrounds the polypeptide exit tunnel on the outside of the ribosome. Forms the main docking site for trigger factor binding to the ribosome. The protein is Large ribosomal subunit protein uL23 of Cereibacter sphaeroides (strain ATCC 17029 / ATH 2.4.9) (Rhodobacter sphaeroides).